Reading from the N-terminus, the 287-residue chain is Inorganic pyrophosphatase (287 aa).

Residue R79 coordinates diphosphate. Residues D116, D121, and D153 each coordinate Mg(2+).

It belongs to the PPase family. Requires Mg(2+) as cofactor.

Its subcellular location is the cytoplasm. It carries out the reaction diphosphate + H2O = 2 phosphate + H(+). This is Inorganic pyrophosphatase (IPP1) from Eremothecium gossypii (strain ATCC 10895 / CBS 109.51 / FGSC 9923 / NRRL Y-1056) (Yeast).